Consider the following 72-residue polypeptide: DNA-directed RNA polymerase subunit omega (72 aa).

The protein belongs to the RNA polymerase subunit omega family. As to quaternary structure, the RNAP catalytic core consists of 2 alpha, 1 beta, 1 beta' and 1 omega subunit. When a sigma factor is associated with the core the holoenzyme is formed, which can initiate transcription.

It catalyses the reaction RNA(n) + a ribonucleoside 5'-triphosphate = RNA(n+1) + diphosphate. In terms of biological role, promotes RNA polymerase assembly. Latches the N- and C-terminal regions of the beta' subunit thereby facilitating its interaction with the beta and alpha subunits. In Campylobacter lari (strain RM2100 / D67 / ATCC BAA-1060), this protein is DNA-directed RNA polymerase subunit omega.